The chain runs to 185 residues: MLLVIGLGNPGKEYQYTRHNVGFIAIEKIANQYNSSFSTKKKFNCEIAETISDGQKIIFIKPTTYMNLSGKSVISVKTYYNIYPAKIFVIHDDIDLDTGRIKFKTGGGNGGHNGLKSIDGVIGNNYNRIRIGVGRPQNNQDVADYVLNHFSKPEYETVMQAIDRITSNFGLILENKLEEFKNKIA.

Tyr14 is a tRNA binding site. The active-site Proton acceptor is His19. The tRNA site is built by Tyr65, Asn67, and Asn113.

Belongs to the PTH family. As to quaternary structure, monomer.

It is found in the cytoplasm. It catalyses the reaction an N-acyl-L-alpha-aminoacyl-tRNA + H2O = an N-acyl-L-amino acid + a tRNA + H(+). Hydrolyzes ribosome-free peptidyl-tRNAs (with 1 or more amino acids incorporated), which drop off the ribosome during protein synthesis, or as a result of ribosome stalling. In terms of biological role, catalyzes the release of premature peptidyl moieties from peptidyl-tRNA molecules trapped in stalled 50S ribosomal subunits, and thus maintains levels of free tRNAs and 50S ribosomes. The protein is Peptidyl-tRNA hydrolase of Rickettsia africae (strain ESF-5).